We begin with the raw amino-acid sequence, 102 residues long: uncharacterized protein (102 aa).

Residues 1–21 (MAESVNENNNNAGDSNGSGRT) form a disordered region. A glycan (N-linked (GlcNAc...) asparagine) is linked at Asn-16. Residues 24-44 (NTIVTIVVVVIVVTLIIILAT) form a helical membrane-spanning segment. Residues 49–102 (IGGSGKKVGAEEPATKLSSKSDDRNGGPNKKSPAKGSSKDDNNTEESVQSNLYG) are disordered. Residues 56–73 (VGAEEPATKLSSKSDDRN) are compositionally biased toward basic and acidic residues. An N-linked (GlcNAc...) asparagine glycan is attached at Asn-90. Residues 93–102 (EESVQSNLYG) show a composition bias toward polar residues.

The protein localises to the membrane. This is an uncharacterized protein from Encephalitozoon cuniculi (strain GB-M1) (Microsporidian parasite).